Reading from the N-terminus, the 125-residue chain is uncharacterized protein (125 aa).

The PRD domain occupies 15–121 (QINQSIIDVI…HSLVLEQKQL (107 aa)).

This is an uncharacterized protein from Haemophilus influenzae (strain ATCC 51907 / DSM 11121 / KW20 / Rd).